A 412-amino-acid polypeptide reads, in one-letter code: MFNLNEISKIDPEVAKAIELEVNRQRNKIELIASENFVSKAVIEAMGTPLTNKYAEGYPGKRYYGGCEFVDIIENLAIERAKKIFGAEHANVQPHSGAQANMAVFFAVLNPGDTILGMNLSHGGHLSHGSPVNMSGKYYNVISYGVRKEDCRIDYDEVRKLAKEHRPKLIVAGASAYPRIIDFKAFRDIADEVGAYLMVDIAHIAGLVAAGLHPNPVPYAHFVTTTTHKTLRGPRGGLILCGNEHAKMIDKAVFPGIQGGPLMHVIAAKAVSFAEVLTDEFKQYQQQIVKNAKTLANALMEKGIDLVSGGTDNHLMLVDLRNKGLTGKYVQHILDEVCITVNKNGIPFDPESPFVTSGIRIGTPAVTARGMKEEDMVEIADLINLTITDYENSKEKVKERVRMLCEKYPLYQ.

(6S)-5,6,7,8-tetrahydrofolate contacts are provided by residues L120 and 124-126; that span reads GHL. K229 is modified (N6-(pyridoxal phosphate)lysine). 352 to 354 serves as a coordination point for (6S)-5,6,7,8-tetrahydrofolate; sequence SPF.

It belongs to the SHMT family. In terms of assembly, homodimer. Pyridoxal 5'-phosphate is required as a cofactor.

The protein resides in the cytoplasm. The enzyme catalyses (6R)-5,10-methylene-5,6,7,8-tetrahydrofolate + glycine + H2O = (6S)-5,6,7,8-tetrahydrofolate + L-serine. The protein operates within one-carbon metabolism; tetrahydrofolate interconversion. It functions in the pathway amino-acid biosynthesis; glycine biosynthesis; glycine from L-serine: step 1/1. Functionally, catalyzes the reversible interconversion of serine and glycine with tetrahydrofolate (THF) serving as the one-carbon carrier. This reaction serves as the major source of one-carbon groups required for the biosynthesis of purines, thymidylate, methionine, and other important biomolecules. Also exhibits THF-independent aldolase activity toward beta-hydroxyamino acids, producing glycine and aldehydes, via a retro-aldol mechanism. The polypeptide is Serine hydroxymethyltransferase (Acetivibrio thermocellus (strain ATCC 27405 / DSM 1237 / JCM 9322 / NBRC 103400 / NCIMB 10682 / NRRL B-4536 / VPI 7372) (Clostridium thermocellum)).